We begin with the raw amino-acid sequence, 1126 residues long: Ubiquitin carboxyl-terminal hydrolase 16/45 (1126 aa).

A compositionally biased stretch (basic and acidic residues) spans 1–15; sequence MVKKRQADSRDHDCS. Positions 1-44 are disordered; that stretch reads MVKKRQADSRDHDCSTDSGNEDLHHRKGLGSPGQSDGATPTTAS. Over residues 32-44 the composition is skewed to polar residues; sequence PGQSDGATPTTAS. The UBP-type zinc finger occupies 43–181; that stretch reads ASCQHIKKAV…ELVKKLAQKP (139 aa). Positions 45, 47, 70, 73, 111, 114, 119, 126, 130, 139, 152, and 155 each coordinate Zn(2+). Composition is skewed to low complexity over residues 215-229 and 254-264; these read GGSF…SLAA and SSGLSTSDSLT. Positions 215-264 are disordered; that stretch reads GGSFDDSSSRGSLAAAGGGGGVGSSRNRQVAIPMPPPEPSSGLSTSDSLT. Cys315 functions as the Nucleophile in the catalytic mechanism. Disordered regions lie at residues 513–547, 570–762, and 795–833; these read KPQP…INTK, ASLG…SGSS, and EQGA…ARTK. The segment covering 524-539 has biased composition (low complexity); it reads PELSLTSSSSSVTPST. The segment covering 586–598 has biased composition (basic residues); that stretch reads QRKAKRAAKKRQK. Composition is skewed to low complexity over residues 599–614 and 646–657; these read SSLN…GNEL and TEDSTTSSVTTS. Over residues 674 to 701 the composition is skewed to polar residues; it reads APSTNNVPSSTASLTAPSKTYMDSNGNA. Basic and acidic residues predominate over residues 705–718; the sequence is GEKRDDTPEHMDKD. The span at 730–762 shows a compositional bias: low complexity; sequence ATSPAPTATNSSTSTSATGNNNSVAGSGLSGSS. Residues 807–816 are compositionally biased toward basic and acidic residues; it reads GEAKAIEQPE. Over residues 821–830 the composition is skewed to low complexity; the sequence is QAQAMAQAQA. His984 acts as the Proton acceptor in catalysis. The segment at 1037–1089 is disordered; sequence LKVLDDSDDFSNSSSNSSTSDESQTPATPLEEQQTQQAQQPQQPQQLEEAANV. The segment covering 1046–1086 has biased composition (low complexity); the sequence is FSNSSSNSSTSDESQTPATPLEEQQTQQAQQPQQPQQLEEA.

Belongs to the peptidase C19 family.

It catalyses the reaction Thiol-dependent hydrolysis of ester, thioester, amide, peptide and isopeptide bonds formed by the C-terminal Gly of ubiquitin (a 76-residue protein attached to proteins as an intracellular targeting signal).. In terms of biological role, involved in the regulation of DNA damage repair. The sequence is that of Ubiquitin carboxyl-terminal hydrolase 16/45 from Drosophila melanogaster (Fruit fly).